The chain runs to 300 residues: tRNA pseudouridine synthase B (300 aa).

Aspartate 38 acts as the Nucleophile in catalysis.

The protein belongs to the pseudouridine synthase TruB family. Type 1 subfamily.

The enzyme catalyses uridine(55) in tRNA = pseudouridine(55) in tRNA. In terms of biological role, responsible for synthesis of pseudouridine from uracil-55 in the psi GC loop of transfer RNAs. In Dehalococcoides mccartyi (strain ATCC BAA-2266 / KCTC 15142 / 195) (Dehalococcoides ethenogenes (strain 195)), this protein is tRNA pseudouridine synthase B.